The sequence spans 669 residues: Glycine--tRNA ligase beta subunit (669 aa).

It belongs to the class-II aminoacyl-tRNA synthetase family. In terms of assembly, tetramer of two alpha and two beta subunits.

It localises to the cytoplasm. The catalysed reaction is tRNA(Gly) + glycine + ATP = glycyl-tRNA(Gly) + AMP + diphosphate. The protein is Glycine--tRNA ligase beta subunit of Phenylobacterium zucineum (strain HLK1).